Reading from the N-terminus, the 265-residue chain is Flagellar brake protein YcgR (265 aa).

In terms of domain architecture, PilZ spans glutamine 135 to arginine 252.

The protein belongs to the YcgR family. Monomer. Interacts with the flagellar basal bodies.

Its subcellular location is the bacterial flagellum basal body. Acts as a flagellar brake, regulating swimming and swarming in a bis-(3'-5') cyclic diguanylic acid (c-di-GMP)-dependent manner. Binds 1 c-di-GMP dimer per subunit. Increasing levels of c-di-GMP lead to decreased motility. The protein is Flagellar brake protein YcgR of Xanthomonas campestris pv. campestris (strain B100).